The chain runs to 235 residues: Phosphoribosylaminoimidazole-succinocarboxamide synthase (235 aa).

This sequence belongs to the SAICAR synthetase family.

The catalysed reaction is 5-amino-1-(5-phospho-D-ribosyl)imidazole-4-carboxylate + L-aspartate + ATP = (2S)-2-[5-amino-1-(5-phospho-beta-D-ribosyl)imidazole-4-carboxamido]succinate + ADP + phosphate + 2 H(+). The protein operates within purine metabolism; IMP biosynthesis via de novo pathway; 5-amino-1-(5-phospho-D-ribosyl)imidazole-4-carboxamide from 5-amino-1-(5-phospho-D-ribosyl)imidazole-4-carboxylate: step 1/2. The protein is Phosphoribosylaminoimidazole-succinocarboxamide synthase of Streptococcus pneumoniae (strain ATCC 700669 / Spain 23F-1).